Reading from the N-terminus, the 98-residue chain is uncharacterized protein (98 aa).

Over residues 19-31 the composition is skewed to basic residues; the sequence is RRMSKRSKNKAKK. The tract at residues 19-47 is disordered; that stretch reads RRMSKRSKNKAKKERVPVEDRPPTPMPTS.

Belongs to the lymphocryptovirus BNLF2B family.

This is an uncharacterized protein from Epstein-Barr virus (strain AG876) (HHV-4).